The following is a 726-amino-acid chain: Catalase-peroxidase (726 aa).

Residues 1-33 (MSTTDDTHNTLSTGKCPFHQGGHDRSAGAGTAS) are disordered. A cross-link (tryptophyl-tyrosyl-methioninium (Trp-Tyr) (with M-252)) is located at residues 105-226 (WHGAGTYRSI…LGATEMGLIY (122 aa)). The Proton acceptor role is filled by histidine 106. Residues 226 to 252 (YVNPEGPDHSGEPLSAAAAIRATFGNM) constitute a cross-link (tryptophyl-tyrosyl-methioninium (Tyr-Met) (with W-105)). Position 267 (histidine 267) interacts with heme b.

It belongs to the peroxidase family. Peroxidase/catalase subfamily. In terms of assembly, homodimer or homotetramer. The cofactor is heme b. Formation of the three residue Trp-Tyr-Met cross-link is important for the catalase, but not the peroxidase activity of the enzyme.

The enzyme catalyses H2O2 + AH2 = A + 2 H2O. It carries out the reaction 2 H2O2 = O2 + 2 H2O. Functionally, bifunctional enzyme with both catalase and broad-spectrum peroxidase activity. This chain is Catalase-peroxidase, found in Salmonella choleraesuis (strain SC-B67).